A 350-amino-acid chain; its full sequence is Autophagy-related protein 3 (350 aa).

Positions 85-166 are flexible region; that stretch reads NFAGDAGLEE…EEDDEAIIRD (82 aa). The segment at 97 to 171 is disordered; sequence VDDGDEFKGS…AIIRDTDASG (75 aa). A compositionally biased stretch (basic and acidic residues) spans 102-113; the sequence is EFKGSKGDDDGW. The span at 146–161 shows a compositional bias: acidic residues; it reads DDDDDIPDMEDEEDDE. Cys244 acts as the Glycyl thioester intermediate in catalysis. The interval 248 to 326 is handle region; it reads PVMKTLLDRA…DQEVAIRVDQ (79 aa). 2 positions are modified to N6-acetyllysine: Lys262 and Lys267.

It belongs to the ATG3 family. As to quaternary structure, monomer. Interacts with ATG8 through an intermediate thioester bond through the C-terminal Gly of ATG8. Also interacts with the 40 amino acid C-terminal region of the E1-like ATG7 enzyme. Also interacts with the ATG12-ATG5 conjugate. Interacts with HAT1. Acetylated by HAT1 at Lys-262 and Lys-267, which affects the interaction with ATG8 and prevents autophagy during both appressorium development and nutrient starvation.

It is found in the preautophagosomal structure. The protein localises to the cytoplasm. Functionally, E2 conjugating enzyme required for the cytoplasm to vacuole transport (Cvt) and autophagy. Required for selective autophagic degradation of the nucleus (nucleophagy) as well as for mitophagy which contributes to regulate mitochondrial quantity and quality by eliminating the mitochondria to a basal level to fulfill cellular energy requirements and preventing excess ROS production. Responsible for the E2-like covalent binding of phosphatidylethanolamine to the C-terminal Gly of ATG8. The ATG12-ATG5 conjugate plays a role of an E3 and promotes the transfer of ATG8 from ATG3 to phosphatidylethanolamine (PE). This step is required for the membrane association of ATG8. The formation of the ATG8-phosphatidylethanolamine conjugate is essential for autophagy and for the cytoplasm to vacuole transport (Cvt). The ATG8-PE conjugate mediates tethering between adjacent membranes and stimulates membrane hemifusion, leading to expansion of the autophagosomal membrane during autophagy. Plays a role in appressorium formation and pathogenicity. This Pyricularia oryzae (strain 70-15 / ATCC MYA-4617 / FGSC 8958) (Rice blast fungus) protein is Autophagy-related protein 3.